Reading from the N-terminus, the 201-residue chain is GTP cyclohydrolase 1 (201 aa).

Zn(2+) is bound by residues Cys-90, His-93, and Cys-163.

It belongs to the GTP cyclohydrolase I family. In terms of assembly, toroid-shaped homodecamer, composed of two pentamers of five dimers.

It carries out the reaction GTP + H2O = 7,8-dihydroneopterin 3'-triphosphate + formate + H(+). Its pathway is cofactor biosynthesis; 7,8-dihydroneopterin triphosphate biosynthesis; 7,8-dihydroneopterin triphosphate from GTP: step 1/1. This is GTP cyclohydrolase 1 from Streptomyces avermitilis (strain ATCC 31267 / DSM 46492 / JCM 5070 / NBRC 14893 / NCIMB 12804 / NRRL 8165 / MA-4680).